A 245-amino-acid chain; its full sequence is Probable transcriptional regulatory protein Cbei_4222 (245 aa).

The protein belongs to the TACO1 family.

The protein localises to the cytoplasm. This chain is Probable transcriptional regulatory protein Cbei_4222, found in Clostridium beijerinckii (strain ATCC 51743 / NCIMB 8052) (Clostridium acetobutylicum).